Reading from the N-terminus, the 539-residue chain is Chaperonin GroEL (539 aa).

Residues 30 to 33 (TLGP), 87 to 91 (DGTTT), Gly414, 479 to 481 (DAL), and Asp495 each bind ATP.

Belongs to the chaperonin (HSP60) family. As to quaternary structure, forms a cylinder of 14 subunits composed of two heptameric rings stacked back-to-back. Interacts with the co-chaperonin GroES.

It localises to the cytoplasm. It carries out the reaction ATP + H2O + a folded polypeptide = ADP + phosphate + an unfolded polypeptide.. Its function is as follows. Together with its co-chaperonin GroES, plays an essential role in assisting protein folding. The GroEL-GroES system forms a nano-cage that allows encapsulation of the non-native substrate proteins and provides a physical environment optimized to promote and accelerate protein folding. The protein is Chaperonin GroEL of Caldicellulosiruptor saccharolyticus (strain ATCC 43494 / DSM 8903 / Tp8T 6331).